Reading from the N-terminus, the 330-residue chain is DNA-directed RNA polymerase subunit alpha (330 aa).

Residues 1–232 (MAILAFQKPD…YHFMLFSDEK (232 aa)) are alpha N-terminal domain (alpha-NTD). The tract at residues 248-330 (EEVLHMRQLL…DISKYKLDKE (83 aa)) is alpha C-terminal domain (alpha-CTD).

The protein belongs to the RNA polymerase alpha chain family. In terms of assembly, homodimer. The RNAP catalytic core consists of 2 alpha, 1 beta, 1 beta' and 1 omega subunit. When a sigma factor is associated with the core the holoenzyme is formed, which can initiate transcription.

The catalysed reaction is RNA(n) + a ribonucleoside 5'-triphosphate = RNA(n+1) + diphosphate. In terms of biological role, DNA-dependent RNA polymerase catalyzes the transcription of DNA into RNA using the four ribonucleoside triphosphates as substrates. This is DNA-directed RNA polymerase subunit alpha from Bacteroides fragilis (strain ATCC 25285 / DSM 2151 / CCUG 4856 / JCM 11019 / LMG 10263 / NCTC 9343 / Onslow / VPI 2553 / EN-2).